Here is a 609-residue protein sequence, read N- to C-terminus: tRNA 5-methylaminomethyl-2-thiouridine biosynthesis bifunctional protein MnmC (609 aa).

A tRNA (mnm(5)s(2)U34)-methyltransferase region spans residues 1 to 229; that stretch reads MVELAAATCL…TRNTLPARAM (229 aa). The segment at 237 to 609 is FAD-dependent cmnm(5)s(2)U34 oxidoreductase; sequence IGAGLAGASV…SPELPVSCAP (373 aa).

It in the N-terminal section; belongs to the methyltransferase superfamily. tRNA (mnm(5)s(2)U34)-methyltransferase family. This sequence in the C-terminal section; belongs to the DAO family. FAD serves as cofactor.

It localises to the cytoplasm. The catalysed reaction is 5-aminomethyl-2-thiouridine(34) in tRNA + S-adenosyl-L-methionine = 5-methylaminomethyl-2-thiouridine(34) in tRNA + S-adenosyl-L-homocysteine + H(+). Catalyzes the last two steps in the biosynthesis of 5-methylaminomethyl-2-thiouridine (mnm(5)s(2)U) at the wobble position (U34) in tRNA. Catalyzes the FAD-dependent demodification of cmnm(5)s(2)U34 to nm(5)s(2)U34, followed by the transfer of a methyl group from S-adenosyl-L-methionine to nm(5)s(2)U34, to form mnm(5)s(2)U34. The protein is tRNA 5-methylaminomethyl-2-thiouridine biosynthesis bifunctional protein MnmC (mnmC) of Albidiferax ferrireducens (strain ATCC BAA-621 / DSM 15236 / T118) (Rhodoferax ferrireducens).